We begin with the raw amino-acid sequence, 192 residues long: I-Kappa-B like protein H1 (192 aa).

ANK repeat units lie at residues 94-126, 131-161, and 165-192; these read KGAQCTHIIATSNVSCSIDMMNIVLQLGADING, AGLTPLHICVNKKNYALAEWLCQAPGIDVKV, and GKETPYDLACKMEDRKMMKIFEERSKKM.

Belongs to the polydnaviridae I-Kappa-B-like protein family.

Its function is as follows. Suppresses the host immune response through NF-kappa-B inactivation. Possesses ankyrin repeat domains required for NF-kappa-B binding but lacks the regulatory regions required for dissociation from NF-kappa-B and degradation. Therefore, prevents host NF-kappa-B release and subsequent activation. The chain is I-Kappa-B like protein H1 (H4) from Microplitis demolitor bracovirus (isolate Webb) (MdBV).